The primary structure comprises 139 residues: Protein archease (139 aa).

The Ca(2+) site is built by D12, D138, and I139.

This sequence belongs to the archease family.

Activates the tRNA-splicing ligase complex by facilitating the enzymatic turnover of catalytic subunit RtcB. Acts by promoting the guanylylation of RtcB, a key intermediate step in tRNA ligation. Can also alter the NTP specificity of RtcB such that ATP, dGTP or ITP is used efficiently. In Saccharolobus islandicus (strain Y.N.15.51 / Yellowstone #2) (Sulfolobus islandicus), this protein is Protein archease.